We begin with the raw amino-acid sequence, 352 residues long: 7,8-didemethyl-8-hydroxy-5-deazariboflavin synthase (352 aa).

The region spanning 35-275 is the Radical SAM core domain; that stretch reads ITFSKNAFIP…EDISIQVPPN (241 aa). Positions 49, 53, and 56 each coordinate [4Fe-4S] cluster.

It belongs to the radical SAM superfamily. CofG family. As to quaternary structure, consists of two subunits, CofG and CofH. [4Fe-4S] cluster serves as cofactor.

It carries out the reaction 5-amino-5-(4-hydroxybenzyl)-6-(D-ribitylimino)-5,6-dihydrouracil + S-adenosyl-L-methionine = 7,8-didemethyl-8-hydroxy-5-deazariboflavin + 5'-deoxyadenosine + L-methionine + NH4(+) + H(+). Its pathway is cofactor biosynthesis; coenzyme F0 biosynthesis. In terms of biological role, catalyzes the radical-mediated synthesis of 7,8-didemethyl-8-hydroxy-5-deazariboflavin from 5-amino-5-(4-hydroxybenzyl)-6-(D-ribitylimino)-5,6-dihydrouracil. This Methanococcus maripaludis (strain C6 / ATCC BAA-1332) protein is 7,8-didemethyl-8-hydroxy-5-deazariboflavin synthase.